The primary structure comprises 178 residues: Peptide methionine sulfoxide reductase MsrA (178 aa).

The active site involves cysteine 14.

This sequence belongs to the MsrA Met sulfoxide reductase family.

It catalyses the reaction L-methionyl-[protein] + [thioredoxin]-disulfide + H2O = L-methionyl-(S)-S-oxide-[protein] + [thioredoxin]-dithiol. The enzyme catalyses [thioredoxin]-disulfide + L-methionine + H2O = L-methionine (S)-S-oxide + [thioredoxin]-dithiol. Its function is as follows. Has an important function as a repair enzyme for proteins that have been inactivated by oxidation. Catalyzes the reversible oxidation-reduction of methionine sulfoxide in proteins to methionine. The chain is Peptide methionine sulfoxide reductase MsrA from Bacillus pumilus (strain SAFR-032).